Here is a 281-residue protein sequence, read N- to C-terminus: Ribosomal RNA small subunit methyltransferase A (281 aa).

Positions 36, 38, 63, 84, 109, and 127 each coordinate S-adenosyl-L-methionine.

Belongs to the class I-like SAM-binding methyltransferase superfamily. rRNA adenine N(6)-methyltransferase family. RsmA subfamily.

It localises to the cytoplasm. It catalyses the reaction adenosine(1518)/adenosine(1519) in 16S rRNA + 4 S-adenosyl-L-methionine = N(6)-dimethyladenosine(1518)/N(6)-dimethyladenosine(1519) in 16S rRNA + 4 S-adenosyl-L-homocysteine + 4 H(+). In terms of biological role, specifically dimethylates two adjacent adenosines (A1518 and A1519) in the loop of a conserved hairpin near the 3'-end of 16S rRNA in the 30S particle. May play a critical role in biogenesis of 30S subunits. The chain is Ribosomal RNA small subunit methyltransferase A from Borrelia garinii subsp. bavariensis (strain ATCC BAA-2496 / DSM 23469 / PBi) (Borreliella bavariensis).